A 622-amino-acid chain; its full sequence is Chaperone protein HscA homolog (622 aa).

The protein belongs to the heat shock protein 70 family.

Chaperone involved in the maturation of iron-sulfur cluster-containing proteins. Has a low intrinsic ATPase activity which is markedly stimulated by HscB. The chain is Chaperone protein HscA homolog from Burkholderia thailandensis (strain ATCC 700388 / DSM 13276 / CCUG 48851 / CIP 106301 / E264).